The primary structure comprises 316 residues: Ribosomal RNA small subunit methyltransferase H (316 aa).

S-adenosyl-L-methionine contacts are provided by residues 35 to 37 (AGH), Asp-55, Phe-84, Asp-105, and Gln-112.

Belongs to the methyltransferase superfamily. RsmH family.

The protein resides in the cytoplasm. The enzyme catalyses cytidine(1402) in 16S rRNA + S-adenosyl-L-methionine = N(4)-methylcytidine(1402) in 16S rRNA + S-adenosyl-L-homocysteine + H(+). Functionally, specifically methylates the N4 position of cytidine in position 1402 (C1402) of 16S rRNA. This chain is Ribosomal RNA small subunit methyltransferase H, found in Streptococcus gordonii (strain Challis / ATCC 35105 / BCRC 15272 / CH1 / DL1 / V288).